We begin with the raw amino-acid sequence, 115 residues long: Ubiquitin-related modifier 1 (115 aa).

Glycine 115 carries the 1-thioglycine modification. A Glycyl lysine isopeptide (Gly-Lys) (interchain with K-? in acceptor proteins) cross-link involves residue glycine 115.

It belongs to the URM1 family. C-terminal thiocarboxylation occurs in 2 steps, it is first acyl-adenylated (-COAMP) via the hesA/moeB/thiF part of UBA4, then thiocarboxylated (-COSH) via the rhodanese domain of UBA4.

The protein resides in the cytoplasm. The protein operates within tRNA modification; 5-methoxycarbonylmethyl-2-thiouridine-tRNA biosynthesis. In terms of biological role, acts as a sulfur carrier required for 2-thiolation of mcm(5)S(2)U at tRNA wobble positions of cytosolic tRNA(Lys), tRNA(Glu) and tRNA(Gln). Serves as sulfur donor in tRNA 2-thiolation reaction by being thiocarboxylated (-COSH) at its C-terminus by the MOCS3 homolog UBA4. The sulfur is then transferred to tRNA to form 2-thiolation of mcm(5)S(2)U. Prior mcm(5) tRNA modification by the elongator complex is required for 2-thiolation. Also acts as a ubiquitin-like protein (UBL) that is covalently conjugated via an isopeptide bond to lysine residues of target proteins such as AHP1. The thiocarboxylated form serves as substrate for conjugation and oxidative stress specifically induces the formation of UBL-protein conjugates. The polypeptide is Ubiquitin-related modifier 1 (Coccidioides immitis (strain RS) (Valley fever fungus)).